The chain runs to 487 residues: 3-octaprenyl-4-hydroxybenzoate carboxy-lyase (487 aa).

N172 is a binding site for Mn(2+). Residues 175–177 (IYR), 189–191 (RWL), and 194–195 (RG) each bind prenylated FMN. E238 is a binding site for Mn(2+). D287 acts as the Proton donor in catalysis.

Belongs to the UbiD family. As to quaternary structure, homohexamer. Requires prenylated FMN as cofactor. The cofactor is Mn(2+).

The protein resides in the cell membrane. The catalysed reaction is a 4-hydroxy-3-(all-trans-polyprenyl)benzoate + H(+) = a 2-(all-trans-polyprenyl)phenol + CO2. It participates in cofactor biosynthesis; ubiquinone biosynthesis. In terms of biological role, catalyzes the decarboxylation of 3-octaprenyl-4-hydroxy benzoate to 2-octaprenylphenol, an intermediate step in ubiquinone biosynthesis. The sequence is that of 3-octaprenyl-4-hydroxybenzoate carboxy-lyase from Actinobacillus pleuropneumoniae serotype 7 (strain AP76).